We begin with the raw amino-acid sequence, 174 residues long: 3-hydroxyanthranilate 3,4-dioxygenase (174 aa).

R47 contacts O2. H51, E57, and H95 together coordinate Fe cation. Residue E57 coordinates substrate. Residues R99 and E110 each contribute to the substrate site. C125, C128, C162, and C165 together coordinate Fe cation.

The protein belongs to the 3-HAO family. Homodimer. It depends on Fe(2+) as a cofactor.

The enzyme catalyses 3-hydroxyanthranilate + O2 = (2Z,4Z)-2-amino-3-carboxymuconate 6-semialdehyde. It participates in cofactor biosynthesis; NAD(+) biosynthesis; quinolinate from L-kynurenine: step 3/3. Its function is as follows. Catalyzes the oxidative ring opening of 3-hydroxyanthranilate to 2-amino-3-carboxymuconate semialdehyde, which spontaneously cyclizes to quinolinate. The chain is 3-hydroxyanthranilate 3,4-dioxygenase from Paraburkholderia phytofirmans (strain DSM 17436 / LMG 22146 / PsJN) (Burkholderia phytofirmans).